Here is a 348-residue protein sequence, read N- to C-terminus: Holliday junction branch migration complex subunit RuvB (348 aa).

The interval 4-184 is large ATPase domain (RuvB-L); that stretch reads ADRLIAASGR…FGIVQRLEFY (181 aa). ATP is bound by residues Ile-23, Arg-24, Gly-65, Lys-68, Thr-69, Thr-70, 131–133, Arg-174, Tyr-184, and Arg-221; that span reads EDF. A Mg(2+)-binding site is contributed by Thr-69. The small ATPAse domain (RuvB-S) stretch occupies residues 185–255; sequence SDKDLATIVS…VADMALNLLD (71 aa). Residues 258 to 348 form a head domain (RuvB-H) region; that stretch reads ERGFDHSDRR…GGDFSEPGDE (91 aa). Residues Arg-294, Arg-313, and Arg-318 each coordinate DNA.

Belongs to the RuvB family. In terms of assembly, homohexamer. Forms an RuvA(8)-RuvB(12)-Holliday junction (HJ) complex. HJ DNA is sandwiched between 2 RuvA tetramers; dsDNA enters through RuvA and exits via RuvB. An RuvB hexamer assembles on each DNA strand where it exits the tetramer. Each RuvB hexamer is contacted by two RuvA subunits (via domain III) on 2 adjacent RuvB subunits; this complex drives branch migration. In the full resolvosome a probable DNA-RuvA(4)-RuvB(12)-RuvC(2) complex forms which resolves the HJ.

The protein resides in the cytoplasm. It carries out the reaction ATP + H2O = ADP + phosphate + H(+). Its function is as follows. The RuvA-RuvB-RuvC complex processes Holliday junction (HJ) DNA during genetic recombination and DNA repair, while the RuvA-RuvB complex plays an important role in the rescue of blocked DNA replication forks via replication fork reversal (RFR). RuvA specifically binds to HJ cruciform DNA, conferring on it an open structure. The RuvB hexamer acts as an ATP-dependent pump, pulling dsDNA into and through the RuvAB complex. RuvB forms 2 homohexamers on either side of HJ DNA bound by 1 or 2 RuvA tetramers; 4 subunits per hexamer contact DNA at a time. Coordinated motions by a converter formed by DNA-disengaged RuvB subunits stimulates ATP hydrolysis and nucleotide exchange. Immobilization of the converter enables RuvB to convert the ATP-contained energy into a lever motion, pulling 2 nucleotides of DNA out of the RuvA tetramer per ATP hydrolyzed, thus driving DNA branch migration. The RuvB motors rotate together with the DNA substrate, which together with the progressing nucleotide cycle form the mechanistic basis for DNA recombination by continuous HJ branch migration. Branch migration allows RuvC to scan DNA until it finds its consensus sequence, where it cleaves and resolves cruciform DNA. The polypeptide is Holliday junction branch migration complex subunit RuvB (Pseudomonas putida (strain GB-1)).